Here is a 61-residue protein sequence, read N- to C-terminus: MICYKQRSLQFPITTVCPGEKNCYKKQWSGHRGTIIERGCGCPSVKKGIEINCCTTDKCNR.

Disulfide bonds link C3/C23, C17/C40, C42/C53, and C54/C59.

This sequence belongs to the three-finger toxin family. Short-chain subfamily. Type I alpha-neurotoxin sub-subfamily. In terms of tissue distribution, expressed by the venom gland.

It localises to the secreted. Functionally, binds to muscle nicotinic acetylcholine receptor (nAChR) and inhibit acetylcholine from binding to the receptor, thereby impairing neuromuscular transmission. This is Short neurotoxin 4 from Naja annulifera (Banded Egyptian cobra).